A 356-amino-acid chain; its full sequence is Tyrosine recombinase XerS (356 aa).

One can recognise a Core-binding (CB) domain in the interval 16 to 121; the sequence is IMPWYVLDYY…ALSSLYKYLT (106 aa). The Tyr recombinase domain occupies 169-354; that stretch reads AFLDYVDKEY…VNDEQKNALD (186 aa). Residues arginine 210, lysine 234, histidine 306, arginine 309, and histidine 332 contribute to the active site. Catalysis depends on tyrosine 341, which acts as the O-(3'-phospho-DNA)-tyrosine intermediate.

It belongs to the 'phage' integrase family. XerS subfamily.

It localises to the cytoplasm. Its activity is regulated as follows. FtsK is required for recombination. Site-specific tyrosine recombinase, which acts by catalyzing the cutting and rejoining of the recombining DNA molecules. Essential to convert dimers of the bacterial chromosome into monomers to permit their segregation at cell division. The polypeptide is Tyrosine recombinase XerS (Streptococcus pyogenes serotype M2 (strain MGAS10270)).